A 515-amino-acid chain; its full sequence is Brahma-associated protein of 60 kDa (515 aa).

The interval 1-124 is disordered; sequence MSQRFAPGQA…GGSKSDFATA (124 aa). Residues 17 to 34 show a composition bias toward pro residues; that stretch reads QPPPPAPGMRPYPPPGAS. A compositionally biased stretch (low complexity) spans 49 to 62; the sequence is PVPGTANVAGVPGV. A compositionally biased stretch (gly residues) spans 90-103; it reads TGAGGGGVGSGGGS. The tract at residues 116 to 204 is DNA-binding; sequence GSKSDFATAK…SKEPTNDGEE (89 aa). The SWIB/MDM2 domain occupies 291–368; the sequence is YQPLQFKLDP…PQRLNPLLHP (78 aa).

As to quaternary structure, there are 2 distinct Brahma complexes in the fruit fly, the Brahma-associated proteins (BAP) and Polybromo-containing BAP (PBAP) complexes, which are composed of common subunits Brm, Mor, Snr1/Bap45, Bap111/Dalo, Bap55, Bap60 and Act42A/Bap47, and additional signature subunits osa in the BAP complex and Polybromo and Bap170 in the PBAP complex. Interacts with sisA and sc. Interacts with mor. Interacts with p53. Interacts with erm (via N-terminal). Interacts with akirin; interaction is immune stimulation-dependent; activates selected Rel target gene promoters.

Functionally, involved in the recruitment and site-specific anchoring of the Brahma complex at specific promoter sites. The Brahma complex is a multiprotein complex which is the equivalent of the yeast SWI/SNF complex and acts by remodeling the chromatin by catalyzing an ATP-dependent alteration in the structure of nucleosomal DNA. This complex can both serve as a transcriptional coactivator or corepressor, depending on the context. Participates in X-chromosomal dosage compensation. Participates in neurogenesis. This is Brahma-associated protein of 60 kDa (Bap60) from Drosophila melanogaster (Fruit fly).